A 677-amino-acid chain; its full sequence is Penicillin-binding protein activator LpoA (677 aa).

The signal sequence occupies residues Met1–Ala26. The N-palmitoyl cysteine moiety is linked to residue Cys27. Residue Cys27 is the site of S-diacylglycerol cysteine attachment. A disordered region spans residues Gln309–Tyr359. Residues Ala313–Gln355 are compositionally biased toward low complexity.

The protein belongs to the LpoA family. As to quaternary structure, interacts with PBP1a.

It localises to the cell outer membrane. Functionally, regulator of peptidoglycan synthesis that is essential for the function of penicillin-binding protein 1A (PBP1a). The chain is Penicillin-binding protein activator LpoA from Pantoea ananatis (strain LMG 20103).